Consider the following 687-residue polypeptide: MLLTAFYVVLGSFAAPCQQDGDHIVTCQVNKCETVGLFEICTECKTGGVPVDGFCRPFGSIQAAAAGCTKADGTALDKTATTCGKCGDGYFLFMGGCYKTESQPGSEICTTASNGLCTACKVDSQYIFQNKATPSEKGSECILCWDTTDRNGVMGVANCATCTAPASSTGPATCTECMAGTYKKSDTECAACHSDCATCSGEANNQCTSCETGKYLKSNQCVEKNTCNTNHYPDDTSMTCVACTVLDANCATCSFDSATAKGKCLTCNSNKIPRTTLDGTSTCVENSYAGCQGADNELFMKEDQSACLLCGDTKEASNDKGVANCRTCTKNANDSPPTCTACLDGYFLERGSCTTTCADNCATCSEATTEDKCKICKAGFFLASPGEGKCISCSDTNNGGIDGCAECTKEPAGPLKCTKCKPNRKPAGTSDNYTCTEKTCEDPTVCGGTSGACDAIVIDANGKEHYYCSYCGETNKFPIDGLCTDNKGTNAGCTDHTCSYCAAGFFLYMGGCYKIDTVPGSYMCSKSTTAGVCDTPNANNRFFVVPKAISAEQSVLACGNPLGTIAGGNAYVGVEGCSQCTAPDARADGGMAVATCTACEDGKKPGKSGTGCVACPDANCKSCTMDDVCEECADGFSLDNGKCVSSGTNKSGLSTGAIAGISVAAIVVVGGLVGFLCWWFICRGKAQ.

Residues 1–14 form the signal peptide; sequence MLLTAFYVVLGSFA. The Extracellular segment spans residues 15–660; the sequence is APCQQDGDHI…SGLSTGAIAG (646 aa). The chain crosses the membrane as a helical span at residues 661–681; it reads ISVAAIVVVGGLVGFLCWWFI. Residues 682-687 lie on the Cytoplasmic side of the membrane; that stretch reads CRGKAQ.

This sequence belongs to the Giardia variant surface protein family. Post-translationally, O-glycosylated. The major glycan is a trisaccharide with Glc at the reducing terminus. In terms of processing, palmitoylated.

Its subcellular location is the cell membrane. This chain is Variant-specific surface protein VSP4A1, found in Giardia intestinalis (Giardia lamblia).